The chain runs to 388 residues: Methylthioribose-1-phosphate isomerase (388 aa).

The Proton donor role is filled by D258.

It belongs to the eIF-2B alpha/beta/delta subunits family. MtnA subfamily.

It localises to the cytoplasm. It is found in the nucleus. The catalysed reaction is 5-(methylsulfanyl)-alpha-D-ribose 1-phosphate = 5-(methylsulfanyl)-D-ribulose 1-phosphate. It functions in the pathway amino-acid biosynthesis; L-methionine biosynthesis via salvage pathway; L-methionine from S-methyl-5-thio-alpha-D-ribose 1-phosphate: step 1/6. Its function is as follows. Catalyzes the interconversion of methylthioribose-1-phosphate (MTR-1-P) into methylthioribulose-1-phosphate (MTRu-1-P). The chain is Methylthioribose-1-phosphate isomerase from Sordaria macrospora (strain ATCC MYA-333 / DSM 997 / K(L3346) / K-hell).